The primary structure comprises 63 residues: RKCLNTPLPLFYKTCPEGKDLCYKMNFKLLPKKLSIKRGCTDTCPKSSLLVKVVCCDTDKCNK.

Intrachain disulfides connect C3–C22, C15–C40, C44–C55, and C56–C61.

This sequence belongs to the three-finger toxin family. Short-chain subfamily. Orphan group XVI sub-subfamily. As to expression, expressed by the venom gland.

It localises to the secreted. The protein is Cytotoxin homolog S3C2 of Aspidelaps scutatus (Shield-nose snake).